A 461-amino-acid chain; its full sequence is ATP synthase subunit beta (461 aa).

151 to 158 provides a ligand contact to ATP; it reads GGAGVGKT.

Belongs to the ATPase alpha/beta chains family. In terms of assembly, F-type ATPases have 2 components, CF(1) - the catalytic core - and CF(0) - the membrane proton channel. CF(1) has five subunits: alpha(3), beta(3), gamma(1), delta(1), epsilon(1). CF(0) has three main subunits: a(1), b(2) and c(9-12). The alpha and beta chains form an alternating ring which encloses part of the gamma chain. CF(1) is attached to CF(0) by a central stalk formed by the gamma and epsilon chains, while a peripheral stalk is formed by the delta and b chains.

Its subcellular location is the cell inner membrane. The enzyme catalyses ATP + H2O + 4 H(+)(in) = ADP + phosphate + 5 H(+)(out). Produces ATP from ADP in the presence of a proton gradient across the membrane. The catalytic sites are hosted primarily by the beta subunits. The chain is ATP synthase subunit beta from Alteromonas mediterranea (strain DSM 17117 / CIP 110805 / LMG 28347 / Deep ecotype).